The following is a 157-amino-acid chain: 2-C-methyl-D-erythritol 2,4-cyclodiphosphate synthase (157 aa).

Residues Asp-8 and His-10 each coordinate a divalent metal cation. 4-CDP-2-C-methyl-D-erythritol 2-phosphate is bound by residues 8 to 10 (DVH) and 34 to 35 (HS). His-42 is an a divalent metal cation binding site. 4-CDP-2-C-methyl-D-erythritol 2-phosphate-binding positions include 56 to 58 (DIG), 61 to 65 (FPDTD), 100 to 106 (AQAPKMA), 132 to 135 (TTTE), Phe-139, and Arg-142.

It belongs to the IspF family. In terms of assembly, homotrimer. A divalent metal cation is required as a cofactor.

It carries out the reaction 4-CDP-2-C-methyl-D-erythritol 2-phosphate = 2-C-methyl-D-erythritol 2,4-cyclic diphosphate + CMP. It functions in the pathway isoprenoid biosynthesis; isopentenyl diphosphate biosynthesis via DXP pathway; isopentenyl diphosphate from 1-deoxy-D-xylulose 5-phosphate: step 4/6. Functionally, involved in the biosynthesis of isopentenyl diphosphate (IPP) and dimethylallyl diphosphate (DMAPP), two major building blocks of isoprenoid compounds. Catalyzes the conversion of 4-diphosphocytidyl-2-C-methyl-D-erythritol 2-phosphate (CDP-ME2P) to 2-C-methyl-D-erythritol 2,4-cyclodiphosphate (ME-CPP) with a corresponding release of cytidine 5-monophosphate (CMP). In Pseudomonas fluorescens (strain Pf0-1), this protein is 2-C-methyl-D-erythritol 2,4-cyclodiphosphate synthase.